The following is an 855-amino-acid chain: Leucine--tRNA ligase (855 aa).

Positions 42 to 52 (PYPSGSLHVGH) match the 'HIGH' region motif. A disordered region spans residues 292–311 (SEMDRTAEDKPKKGIPTGGK). Positions 293–303 (EMDRTAEDKPK) are enriched in basic and acidic residues. The 'KMSKS' region motif lies at 614-618 (KMSKS). Lys617 lines the ATP pocket.

The protein belongs to the class-I aminoacyl-tRNA synthetase family.

The protein resides in the cytoplasm. It carries out the reaction tRNA(Leu) + L-leucine + ATP = L-leucyl-tRNA(Leu) + AMP + diphosphate. The polypeptide is Leucine--tRNA ligase (Acaryochloris marina (strain MBIC 11017)).